Here is a 343-residue protein sequence, read N- to C-terminus: Ribosomal RNA small subunit methyltransferase C (343 aa).

This sequence belongs to the methyltransferase superfamily. RsmC family. As to quaternary structure, monomer.

The protein resides in the cytoplasm. The enzyme catalyses guanosine(1207) in 16S rRNA + S-adenosyl-L-methionine = N(2)-methylguanosine(1207) in 16S rRNA + S-adenosyl-L-homocysteine + H(+). Functionally, specifically methylates the guanine in position 1207 of 16S rRNA in the 30S particle. The protein is Ribosomal RNA small subunit methyltransferase C of Escherichia coli O17:K52:H18 (strain UMN026 / ExPEC).